The sequence spans 391 residues: Rhizopuspepsin-2 (391 aa).

The signal sequence occupies residues 1-21 (MKLTLISSCVALAFMALATEA). Residues 22 to 68 (APSGKKLSIPLTKNTNYKPSAKNAIQKALAKYHRFRTTSSSNSTSTE) constitute a propeptide, activation peptide. Positions 84-388 (YYGKVTVGTP…NQEVPEVQIA (305 aa)) constitute a Peptidase A1 domain. Residue D102 is part of the active site. A disulfide bond links C115 and C118. D285 is an active-site residue. Cysteines 319 and 352 form a disulfide.

The protein belongs to the peptidase A1 family.

It carries out the reaction Hydrolysis of proteins with broad specificity similar to that of pepsin A, preferring hydrophobic residues at P1 and P1'. Clots milk and activates trypsinogen. Does not cleave 4-Gln-|-His-5, but does cleave 10-His-|-Leu-11 and 12-Val-|-Glu-13 in B chain of insulin.. This is Rhizopuspepsin-2 from Rhizopus niveus.